A 225-amino-acid polypeptide reads, in one-letter code: 2-C-methyl-D-erythritol 4-phosphate cytidylyltransferase (225 aa).

This sequence belongs to the IspD/TarI cytidylyltransferase family. IspD subfamily.

It catalyses the reaction 2-C-methyl-D-erythritol 4-phosphate + CTP + H(+) = 4-CDP-2-C-methyl-D-erythritol + diphosphate. It functions in the pathway isoprenoid biosynthesis; isopentenyl diphosphate biosynthesis via DXP pathway; isopentenyl diphosphate from 1-deoxy-D-xylulose 5-phosphate: step 2/6. In terms of biological role, catalyzes the formation of 4-diphosphocytidyl-2-C-methyl-D-erythritol from CTP and 2-C-methyl-D-erythritol 4-phosphate (MEP). This is 2-C-methyl-D-erythritol 4-phosphate cytidylyltransferase from Cereibacter sphaeroides (strain ATCC 17023 / DSM 158 / JCM 6121 / CCUG 31486 / LMG 2827 / NBRC 12203 / NCIMB 8253 / ATH 2.4.1.) (Rhodobacter sphaeroides).